The primary structure comprises 208 residues: Small ribosomal subunit protein uS5 (208 aa).

The segment covering 1–21 (MSDREQRDGGRSAENNNDRKG) has biased composition (basic and acidic residues). The tract at residues 1 to 38 (MSDREQRDGGRSAENNNDRKGRNNGRRNDRRNHQDNER) is disordered. Positions 41-104 (YIERVVTINR…EEARKNFFRV (64 aa)) constitute an S5 DRBM domain.

It belongs to the universal ribosomal protein uS5 family. Part of the 30S ribosomal subunit. Contacts proteins S4 and S8.

In terms of biological role, with S4 and S12 plays an important role in translational accuracy. Functionally, located at the back of the 30S subunit body where it stabilizes the conformation of the head with respect to the body. The protein is Small ribosomal subunit protein uS5 of Corynebacterium aurimucosum (strain ATCC 700975 / DSM 44827 / CIP 107346 / CN-1) (Corynebacterium nigricans).